Here is a 324-residue protein sequence, read N- to C-terminus: Acetaldehyde dehydrogenase 1 (324 aa).

18 to 21 lines the NAD(+) pocket; that stretch reads SGNI. Cysteine 136 serves as the catalytic Acyl-thioester intermediate. NAD(+) is bound by residues 167-175 and asparagine 297; that span reads SAGPGTRAN.

Belongs to the acetaldehyde dehydrogenase family.

It carries out the reaction acetaldehyde + NAD(+) + CoA = acetyl-CoA + NADH + H(+). This is Acetaldehyde dehydrogenase 1 from Parafrankia sp. (strain EAN1pec).